A 341-amino-acid chain; its full sequence is MVFENDCRMYEKKYPEENELVMVRIESIGDMGVYVSLLEYNNIEGMILLSEISRRRIRSINKLVRVGKTEAVVVVRVDKDKGYIDLSKRRVTPEEYAQCEERFHKSKAVHGIVRYVATKLSTEDNVVKTKHLYTKFVWPLYTKYGHAYEAFKLSITEPSVFNGFDIAENERKVLMETIIQKLKPQPHKVRADLEITCYDYEGIDAIKHAITASQNHALSVLKAPEDGKFDEKAFGVVTIKLVAPPLYVMVGTFDEKEKGLSMVGQCVDVLSEEITKKNGNLTIKAAPRIVGAVDDQELRDLMEQLEVENQDGDGEEHEDDDDDDDDEEEEEKPKEKKSSRK.

The region spanning 18-89 is the S1 motif domain; the sequence is NELVMVRIES…DKGYIDLSKR (72 aa). The interval 301 to 341 is disordered; the sequence is LMEQLEVENQDGDGEEHEDDDDDDDDEEEEEKPKEKKSSRK. Residues 303–330 show a composition bias toward acidic residues; the sequence is EQLEVENQDGDGEEHEDDDDDDDDEEEE. A compositionally biased stretch (basic and acidic residues) spans 331–341; the sequence is EKPKEKKSSRK.

This sequence belongs to the eIF-2-alpha family. In terms of assembly, eukaryotic translation initiation factor 2 eIF2 is a heterotrimeric complex composed of an alpha, a beta and a gamma subunit.

It localises to the cytoplasm. The protein localises to the cytosol. EIF-2 functions in the early steps of protein synthesis by forming a ternary complex with GTP and initiator tRNA. This complex binds to a 40S ribosomal subunit, followed by mRNA binding to form a 43S pre-initiation complex. Junction of the 60S ribosomal subunit to form the 80S initiation complex is preceded by hydrolysis of the GTP bound to eIF-2 and release of an eIF-2-GDP binary complex. In order for eIF-2 to recycle and catalyze another round of initiation, the GDP bound to eIF-2 must exchange with GTP by way of a reaction catalyzed by eIF2B. This chain is Eukaryotic translation initiation factor 2 subunit 1 (eif2s1), found in Dictyostelium discoideum (Social amoeba).